We begin with the raw amino-acid sequence, 349 residues long: Isopentenyl-diphosphate delta-isomerase (349 aa).

Residue 6 to 7 (RK) coordinates substrate. Residues 62 to 64 (AMT), Ser93, and Asn122 each bind FMN. Residue Gln152 participates in substrate binding. Glu153 contacts Mg(2+). Residues Lys184, Thr214, 258–259 (GG), and 280–281 (AG) each bind FMN.

Belongs to the IPP isomerase type 2 family. Homooctamer. Dimer of tetramers. It depends on FMN as a cofactor. NADPH is required as a cofactor. Requires Mg(2+) as cofactor.

Its subcellular location is the cytoplasm. The enzyme catalyses isopentenyl diphosphate = dimethylallyl diphosphate. In terms of biological role, involved in the biosynthesis of isoprenoids. Catalyzes the 1,3-allylic rearrangement of the homoallylic substrate isopentenyl (IPP) to its allylic isomer, dimethylallyl diphosphate (DMAPP). This chain is Isopentenyl-diphosphate delta-isomerase, found in Bacillus cereus (strain B4264).